A 962-amino-acid polypeptide reads, in one-letter code: Rho GTPase-activating protein syd-1 (962 aa).

Disordered regions lie at residues 231–367 (GKKS…MRSD), 397–419 (PRTL…RIMT), and 437–471 (CGEE…NGSP). 4 stretches are compositionally biased toward polar residues: residues 243 to 261 (NATT…SSPR), 323 to 345 (SFNS…SSTA), 401 to 412 (RQPNDSNKSNSL), and 453 to 471 (PPFS…NGSP). A C2 domain is found at 572–696 (RAAGPGINVD…NDDRVFALNL (125 aa)). Residues 729-923 (VPLGRLVQRE…LDMNQASSSL (195 aa)) enclose the Rho-GAP domain. The span at 934 to 947 (VNSESGSDSPATSG) shows a compositional bias: polar residues. Residues 934–962 (VNSESGSDSPATSGQKGGGGVSYVSESQC) are disordered.

Its subcellular location is the synapse. Its function is as follows. Probable GTPase activator for the Rho-type GTPases by converting them to an inactive GDP-bound state. Regulates the localization and assembly of presynaptic components during presynaptic development and is required for specifying the identity of axons during initial polarity acquisition. In these roles it is thought to act cell autonomously downstream of syg-1 and syg-2 and upstream of syd-2, possibly as a positive regulator of the latter. Required for the control of movement, egg-laying and the correct localization of elks-1. This Caenorhabditis briggsae protein is Rho GTPase-activating protein syd-1.